We begin with the raw amino-acid sequence, 744 residues long: Cytosolic neutral trehalase (744 aa).

5 residues coordinate Ca(2+): Asp-99, Asp-101, Asn-103, Gln-105, and Asp-110. Substrate is bound by residues Arg-286, 293 to 294 (WD), Asn-330, 339 to 341 (RSQ), Glu-406, Arg-455, and Gly-458. Catalysis depends on proton donor/acceptor residues Asp-460 and Glu-665.

It belongs to the glycosyl hydrolase 37 family. The cofactor is Ca(2+).

The protein localises to the cytoplasm. It catalyses the reaction alpha,alpha-trehalose + H2O = alpha-D-glucose + beta-D-glucose. Its pathway is carbohydrate degradation. Hydrolyzes intracellular trehalose to glucose. The chain is Cytosolic neutral trehalase from Neurospora crassa (strain ATCC 24698 / 74-OR23-1A / CBS 708.71 / DSM 1257 / FGSC 987).